A 356-amino-acid chain; its full sequence is Tyrosine recombinase XerS (356 aa).

The 106-residue stretch at 16 to 121 folds into the Core-binding (CB) domain; sequence VMPWYVLDYY…ALSSLYKYLT (106 aa). The Tyr recombinase domain occupies 169–354; that stretch reads AFLDYVDKEY…VNDEQKNALD (186 aa). Residues R210, K234, H306, R309, and H332 contribute to the active site. Residue Y341 is the O-(3'-phospho-DNA)-tyrosine intermediate of the active site.

The protein belongs to the 'phage' integrase family. XerS subfamily.

The protein resides in the cytoplasm. With respect to regulation, ftsK is required for recombination. Its function is as follows. Site-specific tyrosine recombinase, which acts by catalyzing the cutting and rejoining of the recombining DNA molecules. Essential to convert dimers of the bacterial chromosome into monomers to permit their segregation at cell division. The chain is Tyrosine recombinase XerS from Streptococcus pyogenes serotype M28 (strain MGAS6180).